The following is a 1405-amino-acid chain: MNQEVMNLFNQQAQPQSFDQIKISISSPEKILSWSYGEIKKPETINYRTFKPERDGLFCARIFGPIKDYECLCGKYKRMKYKGVICEKCGVEVTLARVRRDRMGHIELAAPVAHIWFLKSLPSRIGLLLDMALKDLERILYFESYVVIEPGLTPLKERQLLSEEEYLRAQEEYGEDSFTAMIGAEAIRRILMELDLEGIATSLKEEIATTTSELKPKKLMKRLKIIEAFQLSGNKPEWMILTVVPVIPPDLRPLVPLDGGRFATSDLNDLYRRVINRNNRLKRLIELRAPDIIIRNEKRMLQEAVDALFDNGRRGRVITGANKRPLKSLADMLKGKQGRFRQNLLGKRVDYSGRSVIVVGPELKLHQCGLPKKMALELFKPFIYARLDAKGFSATVKQAKKLVEKEKPEVWDILDEVIREHPVMLNRAPTLHRLGIQAFEPKLIEGKAIQLHPLVCAAFNADFDGDQMAVHVPLSLEAQLEARVLMMSTNNILHPANGQPIIVPSQDIVLGLYYLSIVADGSVGEHKADDKNNPMQGVFGDIGQLEHALAAKSVSLHSKIKWRWRGLGPDGEPVSRIYDTTPGRVILSGVLPMHPKVPFDVVNKLMTKKEISAMIDTVYRHCGQKESVIFCDRIMALGFSHAFKAGISFGKDDMVVPENKWSIVEDTRTLVKDYEQQYNDGLITQGEKYNKVVDAWAKCSDKLAAEMMGRISAVQKDENGADKQVNSIYMMSHSGARGSPAQMKQLAAMRGLMAKPSGEIIETPIISNFKEGLDVLEYFNSTHGARKGLADTALKTANSGYLTRRLVDVAQDAVIREVDCGTTNGIKMRAIIDAGQVVAPLSIRILGRATAEDLVAQDGTVIVKTNETIEERHLPAINAAGIQEVKIRSVLVCQTKSGVCATCYGRDLARGTPVNMGEAVGVIAAQSIGEPGTQLTMRTFHIGGAAQIADSSFVESSFEGTIKIRNRSLAKNSDGDLIATGRSVAVVIVGPDGTERAVHRLQYGARVRVDEGDTIKRGQRIAEWDPYTRPIVAEVDGIVGYEDLYDGQSITETTDESTGIAKRVVIDWRGSSRTSDLKPAMLVLDQDGKPVKLARGSDARYYLPVDAIIGLDPGAKVRAGDVLARVSTDSAKTRDITGGLPRVAELFEARRPKDAAIIAEKSGSIAFGRDYKNKRRLTLTPHDGSDAVEYLIPKGKHIHLQDGDVVELGDYIVDGNPAPHDILAIKGVEELAAYLVNEIQEVYRLQGVSINDKHIEVIVRQMLQKVEITDGGDSDILTGDQIDRTELADFNEKLLAEGKKPIQGVPVLLGITKASLQTKSFISAASFQETTRVLTEAAVNGKVDTLDGLKENVIVGSLIPAGTGSLAADIRSIARRRDNLILQQRSAENAANAAELSELPPAAAE.

Residues Cys71, Cys73, Cys86, and Cys89 each contribute to the Zn(2+) site. Mg(2+) is bound by residues Asp462, Asp464, and Asp466. 4 residues coordinate Zn(2+): Cys820, Cys893, Cys900, and Cys903.

The protein belongs to the RNA polymerase beta' chain family. In terms of assembly, the RNAP catalytic core consists of 2 alpha, 1 beta, 1 beta' and 1 omega subunit. When a sigma factor is associated with the core the holoenzyme is formed, which can initiate transcription. Mg(2+) serves as cofactor. Zn(2+) is required as a cofactor.

It carries out the reaction RNA(n) + a ribonucleoside 5'-triphosphate = RNA(n+1) + diphosphate. In terms of biological role, DNA-dependent RNA polymerase catalyzes the transcription of DNA into RNA using the four ribonucleoside triphosphates as substrates. The sequence is that of DNA-directed RNA polymerase subunit beta' from Methylorubrum extorquens (strain CM4 / NCIMB 13688) (Methylobacterium extorquens).